The chain runs to 141 residues: ATP synthase epsilon chain (141 aa).

This sequence belongs to the ATPase epsilon chain family. F-type ATPases have 2 components, CF(1) - the catalytic core - and CF(0) - the membrane proton channel. CF(1) has five subunits: alpha(3), beta(3), gamma(1), delta(1), epsilon(1). CF(0) has three main subunits: a, b and c.

It localises to the cell inner membrane. Functionally, produces ATP from ADP in the presence of a proton gradient across the membrane. This is ATP synthase epsilon chain from Paraburkholderia phytofirmans (strain DSM 17436 / LMG 22146 / PsJN) (Burkholderia phytofirmans).